The following is a 378-amino-acid chain: Palmitoyltransferase PFA4 (378 aa).

Residues 1 to 9 (MPVKLRWPW) lie on the Cytoplasmic side of the membrane. Residues 10–30 (LGIAIPTFLISFIGYGAHYFI) form a helical membrane-spanning segment. The Lumenal portion of the chain corresponds to 31 to 40 (LSNFLSVPKQ). The chain crosses the membrane as a helical span at residues 41 to 61 (ITFEFCLSMIWLSYYLAICTN). Topologically, residues 62 to 119 (PGRPLPNYKPPPDIWRNFCKKCQSYKPERSHHCKTCNQCVLMMDHHCPWTMNCVGFAN) are cytoplasmic. Residues 78 to 128 (NFCKKCQSYKPERSHHCKTCNQCVLMMDHHCPWTMNCVGFANYPHFLRFLF) form the DHHC domain. The active-site S-palmitoyl cysteine intermediate is the C108. The chain crosses the membrane as a helical span at residues 120 to 140 (YPHFLRFLFWIIVTTSVLFCI). The Lumenal portion of the chain corresponds to 141-164 (QAKRIYFIWQQRHLPGYFFKKSEL). The helical transmembrane segment at 165 to 185 (IFLTISSPLNSFVLLTITILF) threads the bilayer. Residues 186-378 (LRCLFNQILN…DDFGVDVDME (193 aa)) are Cytoplasmic-facing.

The protein belongs to the DHHC palmitoyltransferase family. PFA4 subfamily. Autopalmitoylated.

It localises to the endoplasmic reticulum membrane. The catalysed reaction is L-cysteinyl-[protein] + hexadecanoyl-CoA = S-hexadecanoyl-L-cysteinyl-[protein] + CoA. Mediates the reversible addition of palmitate to target proteins, thereby regulating their membrane association and biological function. Palmitoylates several amino acid permeases. Palmitoylates chitin synthase CHS3, which is required for its proper export from the ER. Can palmitoylate RAS2 in vitro. This Saccharomyces cerevisiae (strain ATCC 204508 / S288c) (Baker's yeast) protein is Palmitoyltransferase PFA4.